We begin with the raw amino-acid sequence, 170 residues long: Peptidyl-prolyl cis-trans isomerase ESS1 (170 aa).

Residues 9–43 (TGLPTPWTVRYSKSKKREYFFNPETKHSQWEEPEG) enclose the WW domain. The interval 30–53 (NPETKHSQWEEPEGTNKDQLHKHL) is disordered. The segment covering 32 to 53 (ETKHSQWEEPEGTNKDQLHKHL) has biased composition (basic and acidic residues). A PpiC domain is found at 57 to 170 (PVRVRCLHIL…SGVHVIKRVG (114 aa)). Ser161 is modified (phosphoserine).

The protein belongs to the PpiC/parvulin rotamase family. Interacts with the RNA polymerase II largest subunit (RPB1) and with the SIN1-RDP3 HDAC subunit SIN3.

The protein localises to the cytoplasm. The protein resides in the nucleus. It carries out the reaction [protein]-peptidylproline (omega=180) = [protein]-peptidylproline (omega=0). Inhibited by 5-hydroxy-1,4-naphthoquinone (juglone), but not by FK506 or cyclosporin A. Its function is as follows. Essential PPIase specific for phosphoserine and phosphothreonine N-terminal to the proline residue. Required for efficient pre-mRNA 3'-end processing and transcription termination, probably by inducing conformational changes by proline-directed isomerization in the C-terminal domain (CTD) of RPB1, thereby altering cofactor binding with the RNA polymerase II transcription complex. Also targets the SIN3-RPD3 histone deacetylase complex (HDAC). This is Peptidyl-prolyl cis-trans isomerase ESS1 (ESS1) from Saccharomyces cerevisiae (strain ATCC 204508 / S288c) (Baker's yeast).